Reading from the N-terminus, the 291-residue chain is 4-hydroxy-tetrahydrodipicolinate synthase (291 aa).

T45 is a binding site for pyruvate. Y131 functions as the Proton donor/acceptor in the catalytic mechanism. The Schiff-base intermediate with substrate role is filled by K159. I202 contributes to the pyruvate binding site.

The protein belongs to the DapA family. Homotetramer; dimer of dimers.

The protein resides in the cytoplasm. It catalyses the reaction L-aspartate 4-semialdehyde + pyruvate = (2S,4S)-4-hydroxy-2,3,4,5-tetrahydrodipicolinate + H2O + H(+). It functions in the pathway amino-acid biosynthesis; L-lysine biosynthesis via DAP pathway; (S)-tetrahydrodipicolinate from L-aspartate: step 3/4. Catalyzes the condensation of (S)-aspartate-beta-semialdehyde [(S)-ASA] and pyruvate to 4-hydroxy-tetrahydrodipicolinate (HTPA). The chain is 4-hydroxy-tetrahydrodipicolinate synthase from Methanosarcina mazei (strain ATCC BAA-159 / DSM 3647 / Goe1 / Go1 / JCM 11833 / OCM 88) (Methanosarcina frisia).